The primary structure comprises 155 residues: MAQFGGEKYGGRHTDEYGNPIQQGAGAHRGGGIMGGGQQAGQHGTTGVLGHGTAGQHGTTGGGLGHGTAGTGGALGGQHRRSGSSSSSSSSESDGEGGRRKKGMKDKMKEKLPGGHGTTTDQQQYGTAATHGQAQQHEKKGIMDKIKEKLPGGQH.

Residues 1 to 155 form a disordered region; that stretch reads MAQFGGEKYG…IKEKLPGGQH (155 aa). 2 stretches are compositionally biased toward gly residues: residues 27–39 and 47–76; these read AHRG…GGQQ and GVLG…GALG. Residues 83-92 show a composition bias toward low complexity; sequence GSSSSSSSSE. Polar residues predominate over residues 118-135; sequence TTTDQQQYGTAATHGQAQ. A compositionally biased stretch (basic and acidic residues) spans 136 to 155; sequence QHEKKGIMDKIKEKLPGGQH.

It belongs to the plant dehydrin family.

This Craterostigma plantagineum (Blue gem) protein is Desiccation-related protein clone PCC6-19.